The chain runs to 121 residues: Protein yippee-like At3g55890 (121 aa).

Residues 12 to 109 (NIYICKLCKT…LELYKISGPH (98 aa)) form the Yippee domain. Residues C16, C19, C72, and C75 each coordinate Zn(2+).

Belongs to the yippee family.

This is Protein yippee-like At3g55890 from Arabidopsis thaliana (Mouse-ear cress).